Here is a 206-residue protein sequence, read N- to C-terminus: Flavin reductase (NADPH) (206 aa).

Gly-10, Thr-12, Gly-13, Asn-14, Thr-15, Arg-35, Ser-38, and Arg-39 together coordinate NADP(+). Ser-42 carries the phosphoserine modification. 5 residues coordinate NADP(+): Asp-54, Val-55, Leu-75, Gly-76, and Arg-78. Position 82 is a phosphoserine (Ser-82). NADP(+) is bound by residues Met-87, Cys-109, His-132, His-153, and Ile-154. The S-nitroso-cysteine intermediate; for S-nitroso-CoA-dependent nitrosyltransferase activity role is filled by Cys-109. Catalysis depends on Cys-188, which acts as the S-nitroso-cysteine intermediate; for S-nitroso-CoA-dependent nitrosyltransferase activity.

Monomer. In terms of tissue distribution, at least expressed in the liver and erythrocyte.

Its subcellular location is the cytoplasm. The catalysed reaction is reduced riboflavin + NADP(+) = riboflavin + NADPH + 2 H(+). The enzyme catalyses bilirubin IXbeta + NADP(+) = biliverdin IXbeta + NADPH + H(+). It catalyses the reaction FMNH2 + NAD(+) = FMN + NADH + 2 H(+). It carries out the reaction FMNH2 + NADP(+) = FMN + NADPH + 2 H(+). The catalysed reaction is S-nitroso-CoA + L-cysteinyl-[protein] = S-nitroso-L-cysteinyl-[protein] + CoA. The enzyme catalyses L-cysteinyl-[SCAN] + S-nitroso-CoA = S-nitroso-L-cysteinyl-[SCAN] + CoA. It catalyses the reaction S-nitroso-L-cysteinyl-[SCAN] + L-cysteinyl-[protein] = L-cysteinyl-[SCAN] + S-nitroso-L-cysteinyl-[protein]. In terms of biological role, enzyme that can both act as a NAD(P)H-dependent reductase and a S-nitroso-CoA-dependent nitrosyltransferase. Promotes fetal heme degradation during development. Also expressed in adult tissues, where it acts as a regulator of hematopoiesis, intermediary metabolism (glutaminolysis, glycolysis, TCA cycle and pentose phosphate pathway) and insulin signaling. Has a broad specificity oxidoreductase activity by catalyzing the NAD(P)H-dependent reduction of a variety of flavins, such as riboflavin, FAD or FMN, biliverdins, methemoglobin and PQQ (pyrroloquinoline quinone). Contributes to fetal heme catabolism by catalyzing reduction of biliverdin IXbeta into bilirubin IXbeta in the liver. Biliverdin IXbeta, which constitutes the major heme catabolite in the fetus is not present in adult. Does not reduce bilirubin IXalpha. Can also reduce the complexed Fe(3+) iron to Fe(2+) in the presence of FMN and NADPH. Acts as a protein nitrosyltransferase by catalyzing nitrosylation of cysteine residues of target proteins, such as HMOX2, INSR and IRS1. S-nitroso-CoA-dependent nitrosyltransferase activity is mediated via a 'ping-pong' mechanism: BLVRB first associates with both S-nitroso-CoA and protein substrate, nitric oxide group is then transferred from S-nitroso-CoA to Cys-109 and Cys-188 residues of BLVRB and from S-nitroso-BLVRB to the protein substrate. Inhibits insulin signaling by mediating nitrosylation of INSR and IRS1, leading to their inhibition. The chain is Flavin reductase (NADPH) (BLVRB) from Bos taurus (Bovine).